The following is a 50-amino-acid chain: Large ribosomal subunit protein bL33B (50 aa).

It belongs to the bacterial ribosomal protein bL33 family.

This Metamycoplasma arthritidis (strain 158L3-1) (Mycoplasma arthritidis) protein is Large ribosomal subunit protein bL33B.